A 176-amino-acid chain; its full sequence is Cell division control protein 31 (176 aa).

The segment covering 1-12 has biased composition (basic residues); the sequence is MFANARAKRRSR. The disordered stretch occupies residues 1-21; it reads MFANARAKRRSRASSPTPARL. 4 EF-hand domains span residues 34–69, 70–105, 107–142, and 143–176; these read EQRQDINEAFKLFDSDKDNAIDYHELRAAMRALGFN, AEKSEVLKILRDFDKTGKGYLQMEDFVRVMTEKIVE, DPLEEIKRAFELFDDDETGKISLRNLRRVAKELNEN, and IDDQELEAMIEEFDLDQDGEINEQEFIAIMMDEA. Ca(2+) contacts are provided by D47, D49, D51, and E58. Residues D156, D158, D160, E162, and E167 each contribute to the Ca(2+) site.

This sequence belongs to the centrin family. Component of the spindle pole body (SPB), acting as the connector of microtubule arrays in the cytoplasm and the nucleoplasm, is involved in nuclear positioning before chromosome segregation, SPB separation, spindle formation, chromosome segregation, nuclear migration into the bud, nuclear reorientation after cytokinesis and nuclear fusion during conjugation. The SPB half-bridge, which is tightly associated with the cytoplasmic side of the nuclear envelope and the SPB, is playing a key role as the starting structure for and in the initiation of SPB duplication in G1. Within the complex, interacts with sad1.

The protein localises to the nucleus. Its function is as follows. Required for the proper coordination between exit from mitosis and the initiation of septation. Has a role in bipolar spindle formation during spindle pole body (SPB) duplication. Required for the localization of sad1 to the SPB. This chain is Cell division control protein 31 (cdc31), found in Schizosaccharomyces pombe (strain 972 / ATCC 24843) (Fission yeast).